Here is a 107-residue protein sequence, read N- to C-terminus: Heme-degrading monooxygenase (107 aa).

An ABM domain is found at Ile2–Tyr94. Position 6 (Asn6) interacts with Fe cation. His76 contacts heme.

It belongs to the antibiotic biosynthesis monooxygenase family. Heme-degrading monooxygenase IsdG subfamily. As to quaternary structure, homodimer.

It localises to the cytoplasm. The enzyme catalyses heme b + 3 reduced [NADPH--hemoprotein reductase] + 3 O2 = biliverdin IXalpha + CO + Fe(2+) + 3 oxidized [NADPH--hemoprotein reductase] + 3 H2O + H(+). Functionally, allows bacterial pathogens to use the host heme as an iron source. Catalyzes the oxidative degradation of the heme macrocyclic porphyrin ring to the biliverdin in the presence of a suitable electron donor such as ascorbate or NADPH--cytochrome P450 reductase, with subsequent release of free iron. The polypeptide is Heme-degrading monooxygenase (Bacillus mycoides (strain KBAB4) (Bacillus weihenstephanensis)).